Reading from the N-terminus, the 413-residue chain is MAEGPEEARGHPPGQDDGGGDHEPVPSLRGPPTTAVPCPRDDPQAEPQAPGRPTAPGLAAAAAADKLEPPRELRKRGEAASGSGAELQEQAGCEAPEAAAPRERPARLSAREYSRQVHEWLWQSYCGYLTWHSGLAAFPAYCSPQPSPQSFPSGGAAVPQAAAPPPPQLGYYNPFYFLSPGAAGPDPRTAAGISTPAPVAGLGPRAPHVQASVRATPVTRVGSAAPSRSPSETGRQAGREYVIPSLAHRFMAEMVDFFILFFIKATIVLSIMHLSGIKDISKFAMHYIIEEIDEDTSMEDLQKMMVVALIYRLLVCFYEIICIWGAGGATPGKFLLGLRVVTCDTSVLIAPSRVLVIPSSNVSITTSTIRALIKNFSIASFFPAFITLLFFQHNRTAYDIVAGTIVVKRNGVR.

A compositionally biased stretch (basic and acidic residues) spans 1–10 (MAEGPEEARG). Residues 1–105 (MAEGPEEARG…PEAAAPRERP (105 aa)) form a disordered region. The span at 49–64 (APGRPTAPGLAAAAAA) shows a compositional bias: low complexity. The span at 65 to 78 (DKLEPPRELRKRGE) shows a compositional bias: basic and acidic residues. Positions 107–139 (RLSAREYSRQVHEWLWQSYCGYLTWHSGLAAFP) are necessary and sufficient to interact with SYVN1. Positions 217–236 (PVTRVGSAAPSRSPSETGRQ) are disordered. Residue S229 is modified to Phosphoserine. The RDD domain maps to 242-408 (VIPSLAHRFM…DIVAGTIVVK (167 aa)). A run of 3 helical transmembrane segments spans residues 257–277 (FFIL…LSGI), 304–324 (MMVV…ICIW), and 371–391 (ALIK…LLFF).

Component of the HRD1 complex, which comprises at least SYNV1/HRD1, FAM8A1, HERPUD1/HERP, OS9, SEL1L and UBE2J1. This interaction stabilizes FAM8A1 protein, preventing its proteasomal degradation. FAM8A1 binding to SYNV1 may promote recruitment of HERPUD1 to the HRD1 complex. In terms of tissue distribution, ubiquitously expressed, with a higher level of expression in testis.

The protein localises to the membrane. Its function is as follows. Plays a role in the assembly of the HRD1 complex, a complex involved in the ubiquitin-proteasome-dependent process of ER-associated degradation (ERAD). The sequence is that of Protein FAM8A1 (FAM8A1) from Homo sapiens (Human).